The following is a 327-amino-acid chain: Malate dehydrogenase (327 aa).

Position 11–17 (11–17) interacts with NAD(+); the sequence is GAAGQIS. Substrate-binding residues include Arg92 and Arg98. NAD(+) contacts are provided by residues Asn105, Gln112, and 129-131; that span reads VGN. Substrate-binding residues include Asn131 and Arg162. The Proton acceptor role is filled by His187.

This sequence belongs to the LDH/MDH superfamily. MDH type 2 family.

It carries out the reaction (S)-malate + NAD(+) = oxaloacetate + NADH + H(+). Its function is as follows. Catalyzes the reversible oxidation of malate to oxaloacetate. The protein is Malate dehydrogenase of Teredinibacter turnerae (strain ATCC 39867 / T7901).